The primary structure comprises 131 residues: MYLIFIIMFGYRRFIKFVFPFPATGIYFHGYTFPIGKLPSDLQLWKVFRRMIKYNGDHYLVALPILMLQPSMYVCTYVCKEVDIEKESRGERERTKKLKLFEIVLYYLSVCTPYWWNITAKFFIPFSHSSP.

3 consecutive transmembrane segments (helical) span residues R13–I35, L60–C79, and L100–T119.

The protein localises to the membrane. This is an uncharacterized protein from Saccharomyces cerevisiae (strain ATCC 204508 / S288c) (Baker's yeast).